A 202-amino-acid polypeptide reads, in one-letter code: LexA repressor (202 aa).

Residues 28-48 (RAEIAQELGFKSPNAAEEHLK) constitute a DNA-binding region (H-T-H motif). Residues S123 and K160 each act as for autocatalytic cleavage activity in the active site.

Belongs to the peptidase S24 family. In terms of assembly, homodimer.

It carries out the reaction Hydrolysis of Ala-|-Gly bond in repressor LexA.. Its function is as follows. Represses a number of genes involved in the response to DNA damage (SOS response), including recA and lexA. In the presence of single-stranded DNA, RecA interacts with LexA causing an autocatalytic cleavage which disrupts the DNA-binding part of LexA, leading to derepression of the SOS regulon and eventually DNA repair. The polypeptide is LexA repressor (Pseudomonas chlororaphis (Pseudomonas aureofaciens)).